A 241-amino-acid polypeptide reads, in one-letter code: Probable 2-phosphosulfolactate phosphatase (241 aa).

It belongs to the ComB family. It depends on Mg(2+) as a cofactor.

It catalyses the reaction (2R)-O-phospho-3-sulfolactate + H2O = (2R)-3-sulfolactate + phosphate. The protein is Probable 2-phosphosulfolactate phosphatase of Microcystis aeruginosa (strain NIES-843 / IAM M-2473).